A 1023-amino-acid polypeptide reads, in one-letter code: Phosphoenolpyruvate carboxylase (1023 aa).

Active-site residues include His-199 and Lys-669.

Belongs to the PEPCase type 1 family. Requires Mg(2+) as cofactor.

It catalyses the reaction oxaloacetate + phosphate = phosphoenolpyruvate + hydrogencarbonate. Its function is as follows. Forms oxaloacetate, a four-carbon dicarboxylic acid source for the tricarboxylic acid cycle. The sequence is that of Phosphoenolpyruvate carboxylase from Trichormus variabilis (strain ATCC 29413 / PCC 7937) (Anabaena variabilis).